A 342-amino-acid chain; its full sequence is Spore photoproduct lyase (342 aa).

The region spanning 77-305 is the Radical SAM core domain; the sequence is SKPSAEYAIP…EEKRRYKWGR (229 aa). Residues Cys-91, Cys-95, and Cys-98 each coordinate [4Fe-4S] cluster. Residues 218-235 constitute a DNA-binding region (H-T-H motif); that stretch reads EAAVKVAKAGYPLGFIVA.

The protein belongs to the radical SAM superfamily. SPL family. In terms of assembly, monomer or homodimer. The cofactor is [4Fe-4S] cluster. S-adenosyl-L-methionine is required as a cofactor.

It carries out the reaction (5R)-5,6-dihydro-5-(thymidin-7-yl)thymidine in DNA = a thymidine dimer in DNA. In terms of biological role, involved in repair of UV radiation-induced DNA damage during spore germination. Can repair thymine dimer 5-thyminyl-5,6-dihydrothymine (known as spore photoproduct (SP)) by in situ monomerization of SP to two thymines. The chain is Spore photoproduct lyase (splB) from Bacillus subtilis (strain 168).